The primary structure comprises 566 residues: Phenylalanine--tRNA ligase beta subunit (566 aa).

The B5 domain maps to 287-362 (YFQEEVEFDV…IGEGLASFYP (76 aa)). Residues Asp340, Asp346, Glu349, and Asp350 each contribute to the Mg(2+) site.

This sequence belongs to the phenylalanyl-tRNA synthetase beta subunit family. Type 2 subfamily. Tetramer of two alpha and two beta subunits. The cofactor is Mg(2+).

Its subcellular location is the cytoplasm. The enzyme catalyses tRNA(Phe) + L-phenylalanine + ATP = L-phenylalanyl-tRNA(Phe) + AMP + diphosphate + H(+). This is Phenylalanine--tRNA ligase beta subunit from Borrelia garinii subsp. bavariensis (strain ATCC BAA-2496 / DSM 23469 / PBi) (Borreliella bavariensis).